The sequence spans 277 residues: NH(3)-dependent NAD(+) synthetase (277 aa).

ATP is bound at residue 36-43; it reads GLSGGIDS. Asp-42 contributes to the Mg(2+) binding site. Deamido-NAD(+) is bound at residue Arg-118. Thr-138 is an ATP binding site. Position 143 (Glu-143) interacts with Mg(2+). The ATP site is built by Lys-167 and Ser-189.

It belongs to the NAD synthetase family. Homodimer.

It catalyses the reaction deamido-NAD(+) + NH4(+) + ATP = AMP + diphosphate + NAD(+) + H(+). Its pathway is cofactor biosynthesis; NAD(+) biosynthesis; NAD(+) from deamido-NAD(+) (ammonia route): step 1/1. Its function is as follows. Catalyzes the ATP-dependent amidation of deamido-NAD to form NAD. Uses ammonia as a nitrogen source. This Chlorobium phaeovibrioides (strain DSM 265 / 1930) (Prosthecochloris vibrioformis (strain DSM 265)) protein is NH(3)-dependent NAD(+) synthetase.